The chain runs to 364 residues: tRNA-specific 2-thiouridylase MnmA (364 aa).

ATP-binding positions include 6 to 13 (AMSGGVDS) and Leu32. Cys101 serves as the catalytic Nucleophile. Cys101 and Cys193 form a disulfide bridge. An ATP-binding site is contributed by Gly125. The tract at residues 143 to 145 (KDQ) is interaction with tRNA. Cys193 acts as the Cysteine persulfide intermediate in catalysis.

It belongs to the MnmA/TRMU family.

The protein localises to the cytoplasm. The enzyme catalyses S-sulfanyl-L-cysteinyl-[protein] + uridine(34) in tRNA + AH2 + ATP = 2-thiouridine(34) in tRNA + L-cysteinyl-[protein] + A + AMP + diphosphate + H(+). Its function is as follows. Catalyzes the 2-thiolation of uridine at the wobble position (U34) of tRNA, leading to the formation of s(2)U34. This is tRNA-specific 2-thiouridylase MnmA from Rhodococcus jostii (strain RHA1).